A 540-amino-acid chain; its full sequence is Cytokinin dehydrogenase 5 (540 aa).

The signal sequence occupies residues 1-22 (MNREMTSSFLLLTFAICKLIIA). The FAD-binding PCMH-type domain maps to 63-241 (SPEEPLAVLH…TRARISLEPA (179 aa)). The FAD site is built by Ala-97, Gly-99, and Gly-101. At His-102 the chain carries Pros-8alpha-FAD histidine. The FAD site is built by Ser-103, Gln-107, Asp-165, Thr-170, Ser-176, Ile-180, and Ile-231. N-linked (GlcNAc...) asparagine glycans are attached at residues Asn-310 and Asn-406. The FAD site is built by Tyr-479 and Gln-517.

Belongs to the oxygen-dependent FAD-linked oxidoreductase family. The cofactor is FAD. As to expression, expressed in the developing leaf petioles and in the rib zone of the axillary shoot meristems. In roots, expressed in the vascular cylinder within the root apical meristem and only faintly detectable in the differentiated root.

The protein resides in the secreted. The protein localises to the extracellular space. It catalyses the reaction N(6)-dimethylallyladenine + A + H2O = 3-methyl-2-butenal + adenine + AH2. Its function is as follows. Catalyzes the oxidation of cytokinins, a family of N(6)-substituted adenine derivatives that are plant hormones, where the substituent is an isopentenyl group. In association with CKX3 regulates the activity of the reproductive meristems, flower organ size and ovule formation. This chain is Cytokinin dehydrogenase 5 (CKX5), found in Arabidopsis thaliana (Mouse-ear cress).